A 498-amino-acid chain; its full sequence is ATP synthase subunit beta, chloroplastic (498 aa).

172–179 (GGAGVGKT) is a binding site for ATP.

It belongs to the ATPase alpha/beta chains family. In terms of assembly, F-type ATPases have 2 components, CF(1) - the catalytic core - and CF(0) - the membrane proton channel. CF(1) has five subunits: alpha(3), beta(3), gamma(1), delta(1), epsilon(1). CF(0) has four main subunits: a(1), b(1), b'(1) and c(9-12).

It localises to the plastid. The protein resides in the chloroplast thylakoid membrane. The enzyme catalyses ATP + H2O + 4 H(+)(in) = ADP + phosphate + 5 H(+)(out). Produces ATP from ADP in the presence of a proton gradient across the membrane. The catalytic sites are hosted primarily by the beta subunits. The protein is ATP synthase subunit beta, chloroplastic of Citrus sinensis (Sweet orange).